A 405-amino-acid polypeptide reads, in one-letter code: Subtilisin-like protease 6 (405 aa).

Positions 1–18 are cleaved as a signal peptide; it reads FITKAIPIVLAALSAVNG. A propeptide spanning residues 19–125 is cleaved from the precursor; that stretch reads AKILEAGPHA…VRTSTNGTNL (107 aa). Residues 34 to 118 form the Inhibitor I9 domain; it reads KYIVVMKKDV…YIEPDFVVRT (85 aa). 2 N-linked (GlcNAc...) asparagine glycosylation sites follow: asparagine 121 and asparagine 124. The Peptidase S8 domain maps to 133-405; sequence SWGLARVGSK…GEGTTGKLIY (273 aa). Active-site charge relay system residues include aspartate 165 and histidine 196. Residues asparagine 250 and asparagine 262 are each glycosylated (N-linked (GlcNAc...) asparagine). Serine 356 functions as the Charge relay system in the catalytic mechanism.

Belongs to the peptidase S8 family.

The protein localises to the secreted. Secreted subtilisin-like serine protease with keratinolytic activity that contributes to pathogenicity. This is Subtilisin-like protease 6 (SUB6) from Trichophyton schoenleinii.